The sequence spans 355 residues: Methionine import ATP-binding protein MetN 1 (355 aa).

Residues 6–245 (IDLKDIAVTF…PKAPLTVDFV (240 aa)) enclose the ABC transporter domain. 42–49 (GYSGAGKS) lines the ATP pocket.

This sequence belongs to the ABC transporter superfamily. Methionine importer (TC 3.A.1.24) family. As to quaternary structure, the complex is composed of two ATP-binding proteins (MetN), two transmembrane proteins (MetI) and a solute-binding protein (MetQ).

It localises to the cell membrane. It carries out the reaction L-methionine(out) + ATP + H2O = L-methionine(in) + ADP + phosphate + H(+). The catalysed reaction is D-methionine(out) + ATP + H2O = D-methionine(in) + ADP + phosphate + H(+). Functionally, part of the ABC transporter complex MetNIQ involved in methionine import. Responsible for energy coupling to the transport system. This chain is Methionine import ATP-binding protein MetN 1, found in Lactiplantibacillus plantarum (strain ATCC BAA-793 / NCIMB 8826 / WCFS1) (Lactobacillus plantarum).